The primary structure comprises 241 residues: MESWIEVSLNTPAQLSLPLYLPDDETFASFWPGDNASLLAALQNVLRQEHSGYIYLWSREGAGRSHLLHAACAELSQRGDAVGYVPLDKRTWFVPEVLDGMEHLSLVCIDNIECVAGDELWEMAIFDLYNRILESGKTRLLITGDRPPRQLKLGLPDLASRLDWGQIYKLQPLSDEDKLQALQLRARLRGFELPEDVGRFLLKRLDREMRTLFITLDQLDHASITAQRKLTIPFVKEILTL.

This sequence belongs to the DnaA family. HdA subfamily. As to quaternary structure, the active form seems to be an ADP-bound monomer. Forms the RIDA complex (regulatory inactivation of DnaA) of ATP-DnaA, ADP-Hda and the DNA-loaded beta sliding clamp (dnaN).

Mediates the interaction of DNA replication initiator protein DnaA with DNA polymerase subunit beta sliding clamp (dnaN). Stimulates hydrolysis of ATP-DnaA to ADP-DnaA, rendering DnaA inactive for reinitiation, a process called regulatory inhibition of DnaA or RIDA. The protein is DnaA regulatory inactivator Hda of Citrobacter koseri (strain ATCC BAA-895 / CDC 4225-83 / SGSC4696).